Here is a 292-residue protein sequence, read N- to C-terminus: THO complex subunit 4B (292 aa).

The tract at residues 1–50 is disordered; sequence MSGGLDMSLDDIIKSNRKPTGSRGRGGIGGGNNTGGRGGSGSNSGPSRRF. Ser-2 is subject to N-acetylserine. Residues 23–42 show a composition bias toward gly residues; that stretch reads RGRGGIGGGNNTGGRGGSGS. The RRM domain maps to 108–185; it reads TKLYISNLDY…KLMKIEIVGT (78 aa). Over residues 241–252 the composition is skewed to gly residues; the sequence is GGGFGGGNFRGG. The segment at 241–292 is disordered; it reads GGGFGGGNFRGGRGARGRGGRGSGGRGRDENVSAEDLDAELDKYHKEAMETS. The span at 280–292 shows a compositional bias: basic and acidic residues; that stretch reads ELDKYHKEAMETS.

The protein belongs to the ALYREF family. Interacts with RH15 and RH56.

The protein resides in the nucleus. It localises to the nucleoplasm. Export adapter involved in nuclear export of spliced and unspliced mRNA. The polypeptide is THO complex subunit 4B (ALY2) (Arabidopsis thaliana (Mouse-ear cress)).